The chain runs to 212 residues: Cyclin-dependent kinase inhibitor 3 (212 aa).

Positions 1-24 are disordered; it reads MKPPISIQASEFDSSDEEPADDEQ. Residues 1–34 form an interaction with CDK2 region; the sequence is MKPPISIQASEFDSSDEEPADDEQTPIQISWLPL. Over residues 13-24 the composition is skewed to acidic residues; sequence DSSDEEPADDEQ. The 170-residue stretch at 32-201 folds into the Tyrosine-protein phosphatase domain; the sequence is LPLSRVNCSQ…FRDKLAAYLS (170 aa). C140 functions as the Phosphocysteine intermediate in the catalytic mechanism.

Belongs to the protein-tyrosine phosphatase family. Interacts with cyclin-dependent kinases such as CDK1, CDK2 and CDK3. Does not interact with CDK4. Interacts (via C-terminus) with phosphorylated CDK2 (via C-terminal helix). Interacts with MS4A3 (via C-terminus); the interaction enhances CDKN3 enzymatic activity.

It localises to the cytoplasm. It is found in the perinuclear region. The catalysed reaction is O-phospho-L-tyrosyl-[protein] + H2O = L-tyrosyl-[protein] + phosphate. The enzyme catalyses O-phospho-L-seryl-[protein] + H2O = L-seryl-[protein] + phosphate. It catalyses the reaction O-phospho-L-threonyl-[protein] + H2O = L-threonyl-[protein] + phosphate. May play a role in cell cycle regulation. Dual specificity phosphatase active toward substrates containing either phosphotyrosine or phosphoserine residues. Dephosphorylates CDK2 at 'Thr-160' in a cyclin-dependent manner. The chain is Cyclin-dependent kinase inhibitor 3 from Rattus norvegicus (Rat).